A 176-amino-acid chain; its full sequence is MTTILSVRLKNKVVIGGDGQATLGNTIMKSNVKKIRSLYHEKVIAGFAGGTADAFTLFEMFDKKLAMYQGQLQRAAIELAKDWRSDRMLRKLEALLAVADKKTSLIITGNGDVIQPEDDLIAIGSGGSYAQSSARALIENTHLDANQIVRKSLNIAANICIYTNHNFTIKELFSEK.

The active site involves Thr-2. Na(+) is bound by residues Ala-157, Cys-160, and Thr-163.

Belongs to the peptidase T1B family. HslV subfamily. As to quaternary structure, a double ring-shaped homohexamer of HslV is capped on each side by a ring-shaped HslU homohexamer. The assembly of the HslU/HslV complex is dependent on binding of ATP.

The protein resides in the cytoplasm. The enzyme catalyses ATP-dependent cleavage of peptide bonds with broad specificity.. Its activity is regulated as follows. Allosterically activated by HslU binding. Its function is as follows. Protease subunit of a proteasome-like degradation complex believed to be a general protein degrading machinery. This is ATP-dependent protease subunit HslV from Buchnera aphidicola subsp. Acyrthosiphon pisum (strain APS) (Acyrthosiphon pisum symbiotic bacterium).